The following is a 499-amino-acid chain: Sialic acid-binding Ig-like lectin 8 (499 aa).

An N-terminal signal peptide occupies residues 1-16 (MLLLLLLLPLLWGTKG). Residues 17 to 363 (MEGDRQYGDG…RPVSQVTLAA (347 aa)) lie on the Extracellular side of the membrane. A carbohydrate is bound by residues Y23, 72 to 75 (RPYQ), R125, and 134 to 138 (SYKSQ). The 84-residue stretch at 40–123 (GLCVHVPCSF…ARKRDKGSYF (84 aa)) folds into the Ig-like V-type domain. 3 cysteine pairs are disulfide-bonded: C42–C181, C47–C107, and C175–C224. 2 consecutive Ig-like C2-type domains span residues 157–240 (PDIL…STVR) and 246–344 (PPWN…LSLS). The N-linked (GlcNAc...) asparagine glycan is linked to N172. Residues N249 and N267 are each glycosylated (N-linked (GlcNAc...) asparagine). C283 and C328 are oxidised to a cystine. A helical transmembrane segment spans residues 364–384 (VGGAGATALAFLSFCIIFIIV). Over 385-499 (RSCRKKSARP…HNPSSKEVRG (115 aa)) the chain is Cytoplasmic. The tract at residues 410 to 443 (RGSASQGPLTESWKDGNPLKKPPPAVAPSSGEEG) is disordered. The ITIM motif motif lies at 445–450 (LHYATL). Disordered stretches follow at residues 451–470 (SFHKVKPQDPQGQEATDSEY) and 478–499 (RETAETQACLRNHNPSSKEVRG). The SLAM-like motif signature appears at 468-473 (SEYSEI).

Belongs to the immunoglobulin superfamily. SIGLEC (sialic acid binding Ig-like lectin) family. As to expression, expressed specifically on blood cells namely basophil, mast cells and eosinophils.

The protein localises to the membrane. Its function is as follows. Putative adhesion molecule that mediates sialic-acid dependent binding to blood cells. Preferentially binds to alpha-2,3-linked sialic acid. Also binds to alpha-2,6-linked sialic acid. The sialic acid recognition site may be masked by cis interactions with sialic acids on the same cell surface. Recognizes simultaneously epitopes having a terminal N-acetylneuraminic acid (sialic acid) and an underlying 6-O-sulfated galactose. Preferentially binds to Gal-6-sulfated sialyl-Lewis X glycan epitopes. This Homo sapiens (Human) protein is Sialic acid-binding Ig-like lectin 8 (SIGLEC8).